The primary structure comprises 193 residues: Ion-translocating oxidoreductase complex subunit A (193 aa).

Transmembrane regions (helical) follow at residues 5–25, 39–59, 72–92, 102–122, 134–154, and 171–191; these read LLLLVGTVLVNNFVLVQFLGL, IGMSFATVFVMTLASLLSYLV, LTTMSFILVIAVVVQFTEMVV, LLGIFLPLITTNCAVLGVALL, IIYGFGAALGFSLVLIMFSAM, and AIAMITAGLMSLAFLGFTGLV.

Belongs to the NqrDE/RnfAE family. In terms of assembly, the complex is composed of six subunits: RnfA, RnfB, RnfC, RnfD, RnfE and RnfG.

It is found in the cell inner membrane. Part of a membrane-bound complex that couples electron transfer with translocation of ions across the membrane. The chain is Ion-translocating oxidoreductase complex subunit A from Colwellia psychrerythraea (strain 34H / ATCC BAA-681) (Vibrio psychroerythus).